Reading from the N-terminus, the 372-residue chain is Putative glutamate--cysteine ligase 2 (372 aa).

The protein belongs to the glutamate--cysteine ligase type 2 family. YbdK subfamily.

The enzyme catalyses L-cysteine + L-glutamate + ATP = gamma-L-glutamyl-L-cysteine + ADP + phosphate + H(+). Its function is as follows. ATP-dependent carboxylate-amine ligase which exhibits weak glutamate--cysteine ligase activity. This is Putative glutamate--cysteine ligase 2 from Rhodopirellula baltica (strain DSM 10527 / NCIMB 13988 / SH1).